Here is a 201-residue protein sequence, read N- to C-terminus: FMN-dependent NADH:quinone oxidoreductase (201 aa).

Residues serine 10, 16–18 (SQS), 96–99 (MYNF), and 140–143 (SRGG) each bind FMN.

It belongs to the azoreductase type 1 family. As to quaternary structure, homodimer. Requires FMN as cofactor.

The catalysed reaction is 2 a quinone + NADH + H(+) = 2 a 1,4-benzosemiquinone + NAD(+). It carries out the reaction N,N-dimethyl-1,4-phenylenediamine + anthranilate + 2 NAD(+) = 2-(4-dimethylaminophenyl)diazenylbenzoate + 2 NADH + 2 H(+). Quinone reductase that provides resistance to thiol-specific stress caused by electrophilic quinones. Its function is as follows. Also exhibits azoreductase activity. Catalyzes the reductive cleavage of the azo bond in aromatic azo compounds to the corresponding amines. This chain is FMN-dependent NADH:quinone oxidoreductase, found in Shigella boydii serotype 4 (strain Sb227).